The sequence spans 243 residues: LexA repressor 2 (243 aa).

Positions 48-68 (IREIGDAVGLTSTSSVAHQLR) form a DNA-binding region, H-T-H motif. Active-site for autocatalytic cleavage activity residues include Ser167 and Lys204.

Belongs to the peptidase S24 family. In terms of assembly, homodimer.

The catalysed reaction is Hydrolysis of Ala-|-Gly bond in repressor LexA.. Functionally, represses a number of genes involved in the response to DNA damage (SOS response), including recA and lexA. In the presence of single-stranded DNA, RecA interacts with LexA causing an autocatalytic cleavage which disrupts the DNA-binding part of LexA, leading to derepression of the SOS regulon and eventually DNA repair. In Nocardia farcinica (strain IFM 10152), this protein is LexA repressor 2.